An 842-amino-acid polypeptide reads, in one-letter code: Taste receptor type 1 member 1 (842 aa).

The signal sequence occupies residues Met1–Cys19. Topologically, residues Trp20–Ser568 are extracellular. Asn88, Asn89, Asn96, Asn136, Asn292, Asn480, and Asn530 each carry an N-linked (GlcNAc...) asparagine glycan. Residues Leu569 to Phe589 form a helical membrane-spanning segment. Topologically, residues Ala590–Arg604 are cytoplasmic. A helical transmembrane segment spans residues Leu605–Gly625. Residues Lys626–Ser640 lie on the Extracellular side of the membrane. The chain crosses the membrane as a helical span at residues Leu641 to Phe661. The Cytoplasmic segment spans residues Lys662 to Gly681. A helical membrane pass occupies residues Ile682 to Trp702. Residues Thr703–Asn725 are Extracellular-facing. A helical transmembrane segment spans residues Ser726–Cys746. The Cytoplasmic portion of the chain corresponds to Ser747 to Cys762. A helical transmembrane segment spans residues Val763–Ile783. The Extracellular portion of the chain corresponds to Tyr784 to Leu789. The helical transmembrane segment at Pro790–Leu810 threads the bilayer. Topologically, residues Pro811–Thr842 are cytoplasmic.

This sequence belongs to the G-protein coupled receptor 3 family. TAS1R subfamily. Forms heterodimers with TAS1R3. As to expression, expressed strongly only in fungiform papillae.

The protein resides in the cell membrane. Putative taste receptor. TAS1R1/TAS1R3 responds to the umami taste stimulus (the taste of monosodium glutamate) and also to most of the 20 standard L-amino acids, but not to their D-enantiomers or other compounds. Sequence differences within and between species can significantly influence the selectivity and specificity of taste responses. The protein is Taste receptor type 1 member 1 (Tas1r1) of Mus musculus (Mouse).